The chain runs to 82 residues: Small ribosomal subunit protein eS21 (82 aa).

This sequence belongs to the eukaryotic ribosomal protein eS21 family.

The polypeptide is Small ribosomal subunit protein eS21 (RPS21) (Oryza sativa subsp. japonica (Rice)).